A 609-amino-acid polypeptide reads, in one-letter code: MSSLADTVEGSEAKRGRFSNNALTSDTGILQKNSTLRNWFLKPTADLKNSCEDRVEDDVNDVYLNDKNSQKSVEERKLGRKVRSFFKQTNSNKDESVLEDEDDALVWKKTSNKCAKKENSHDIQKGSFTKKIRNSIFKSANDVKEFRNENNLLLPVELSSDDENESHFTDANSHVMQSKSPEKIPSKDQCLTKGAKNKGLKKEYEKSFEEYSDDSDDEFSPATPPENVLEGPYKFVFQTPNTFTSQPNITVENDFHKGGRHVIDYLNKKLATMNIDIDLTSGGKQNVSWEEELDQLSDHVIESITNHISKGRMHAQEKQDELEKLKLENLNLSTLKQENLQHKQEINSLKDNLESISKKNNDLILEMNKLKKKSTNNKTNEYISTDENENEEITKSNMGPGILELNVNETSKKLQQSTFKPSKYLPRETRNNENRLKHLEKRIFGLEKSLEKKKKQVRADSVRLDLNRYTIDQFLTLLKSLSEVLQFHNVYGNDLKENDDNIIKIETCCSALNMKNCFEDSSFRLQENSFKRQLGPLFANINFSLIDQLTMNFRFYERSANFQKETIGGLRMMLQDKDNYIKTLMQHLKKKESTKLIKDSKNGASTLTS.

Residues 1–24 form a disordered region; sequence MSSLADTVEGSEAKRGRFSNNALT. Residues Ser159 and Ser160 each carry the phosphoserine modification. Residues 162–225 form a disordered region; that stretch reads DENESHFTDA…DDEFSPATPP (64 aa). A compositionally biased stretch (polar residues) spans 169–179; sequence TDANSHVMQSK. Over residues 200–209 the composition is skewed to basic and acidic residues; sequence LKKEYEKSFE. Residues 210–219 are compositionally biased toward acidic residues; the sequence is EYSDDSDDEF.

This chain is Spore-specific protein YSW1 (YSW1), found in Saccharomyces cerevisiae (strain ATCC 204508 / S288c) (Baker's yeast).